Consider the following 375-residue polypeptide: GTPase HflX (375 aa).

Residues 194-371 (PHIAIVGYAS…RIATLLAGTK (178 aa)) enclose the Hflx-type G domain. GTP is bound by residues 200 to 207 (GYASAGKT), 225 to 229 (FTTIT), 246 to 249 (DTVG), 314 to 317 (NKID), and 349 to 351 (SAK). Positions 207 and 227 each coordinate Mg(2+).

Belongs to the TRAFAC class OBG-HflX-like GTPase superfamily. HflX GTPase family. In terms of assembly, monomer. Associates with the 50S ribosomal subunit. Requires Mg(2+) as cofactor.

The protein localises to the cytoplasm. GTPase that associates with the 50S ribosomal subunit and may have a role during protein synthesis or ribosome biogenesis. The sequence is that of GTPase HflX from Hyperthermus butylicus (strain DSM 5456 / JCM 9403 / PLM1-5).